Reading from the N-terminus, the 194-residue chain is Fe/S biogenesis protein NfuA (194 aa).

The [4Fe-4S] cluster site is built by Cys-151 and Cys-154.

This sequence belongs to the NfuA family. In terms of assembly, homodimer. Requires [4Fe-4S] cluster as cofactor.

In terms of biological role, involved in iron-sulfur cluster biogenesis. Binds a 4Fe-4S cluster, can transfer this cluster to apoproteins, and thereby intervenes in the maturation of Fe/S proteins. Could also act as a scaffold/chaperone for damaged Fe/S proteins. The chain is Fe/S biogenesis protein NfuA from Photobacterium profundum (strain SS9).